Here is a 683-residue protein sequence, read N- to C-terminus: Bifunctional lysine-specific demethylase and histidyl-hydroxylase NO66 (683 aa).

Polar residues predominate over residues 1–26 (MHKASTSSANRANFQGNHKTQKSPNN). Disordered regions lie at residues 1–162 (MHKA…SPIQ) and 179–208 (AAGA…AAKS). Residues 54 to 65 (LTKEQKERRKMM) are compositionally biased toward basic and acidic residues. Positions 85–94 (IDTSASTSNK) are enriched in polar residues. Over residues 95-108 (GKSKAARPTDRKRR) the composition is skewed to basic residues. Positions 116 to 125 (PADANNNNTK) are enriched in low complexity. Phosphoserine is present on Ser-152. The residue at position 158 (Thr-158) is a Phosphothreonine. Ser-159 is modified (phosphoserine). The segment covering 179–189 (AAGASGASGPA) has biased composition (low complexity). The JmjC domain occupies 341 to 480 (NPSTYLVGLR…NLLEKLMPIV (140 aa)). Positions 381, 383, and 446 each coordinate Fe cation.

This sequence belongs to the ROX family. NO66 subfamily. Fe(2+) is required as a cofactor.

The protein localises to the nucleus. It catalyses the reaction N(6),N(6)-dimethyl-L-lysyl(36)-[histone H3] + 2 2-oxoglutarate + 2 O2 = L-lysyl(36)-[histone H3] + 2 formaldehyde + 2 succinate + 2 CO2. Functionally, oxygenase that can act as both a histone lysine demethylase and a ribosomal histidine hydroxylase. Specifically demethylates 'Lys-4' (H3K4me) and 'Lys-36' (H3K36me) of histone H3, thereby playing a central role in histone code. The chain is Bifunctional lysine-specific demethylase and histidyl-hydroxylase NO66 from Drosophila yakuba (Fruit fly).